Reading from the N-terminus, the 172-residue chain is MSKENEVLLNEDIRAREVRCVGDDGTAYGVISRDEALEISNKLGLDLVLIAPDAKPPVCKIMDYGKFRYQQEKKQKEAKKKQKTIEIKEIKLSVKIAQNDINYKVKHASEFLQDGKHVKFRVFLKGREMSTPEAGVAMLEKVWEMIKDEADRDKEPIIEGRYVNMLVTPKKG.

It belongs to the IF-3 family. Monomer.

It is found in the cytoplasm. In terms of biological role, IF-3 binds to the 30S ribosomal subunit and shifts the equilibrium between 70S ribosomes and their 50S and 30S subunits in favor of the free subunits, thus enhancing the availability of 30S subunits on which protein synthesis initiation begins. This Campylobacter concisus (strain 13826) protein is Translation initiation factor IF-3.